Consider the following 256-residue polypeptide: Pimeloyl-[acyl-carrier protein] methyl ester esterase (256 aa).

The 228-residue stretch at His-15–Pro-242 folds into the AB hydrolase-1 domain. Residues Trp-22, Ser-82–Leu-83, and Phe-143–Gln-147 contribute to the substrate site. Ser-82 serves as the catalytic Nucleophile. Residues Asp-207 and His-235 contribute to the active site. A substrate-binding site is contributed by His-235.

The protein belongs to the AB hydrolase superfamily. Carboxylesterase BioH family. As to quaternary structure, monomer.

The protein localises to the cytoplasm. The catalysed reaction is 6-carboxyhexanoyl-[ACP] methyl ester + H2O = 6-carboxyhexanoyl-[ACP] + methanol + H(+). It functions in the pathway cofactor biosynthesis; biotin biosynthesis. Functionally, the physiological role of BioH is to remove the methyl group introduced by BioC when the pimeloyl moiety is complete. It allows to synthesize pimeloyl-ACP via the fatty acid synthetic pathway through the hydrolysis of the ester bonds of pimeloyl-ACP esters. The protein is Pimeloyl-[acyl-carrier protein] methyl ester esterase of Escherichia coli O81 (strain ED1a).